We begin with the raw amino-acid sequence, 175 residues long: uncharacterized protein (175 aa).

Polar residues predominate over residues 1–10; that stretch reads MSKKINNNKT. A disordered region spans residues 1–21; that stretch reads MSKKINNNKTPRNKVKNNNVS.

This is an uncharacterized protein from Ureaplasma parvum serovar 3 (strain ATCC 700970).